Reading from the N-terminus, the 213-residue chain is MLKRMRDDIKMVFEQDPAARSTLEVITTYAGLHAVWSHLIAHKLYNQKKYVAARAISQISRFFTGIEIHPGAKIGKRLFIDHGMGVVIGETCTIGDNVTIYQGVTLGGTGKERGKRHPDIGDNVLIAAGAKVLGNIKINSNVNIGANSVVLQSVPSYSTVVGIPGHIVKQDGVRVGKTFDHRHLPDPIYEQIKHLERQLEKTRNGEIQDDYII.

This sequence belongs to the transferase hexapeptide repeat family.

Its subcellular location is the cytoplasm. The catalysed reaction is L-serine + acetyl-CoA = O-acetyl-L-serine + CoA. Its pathway is amino-acid biosynthesis; L-cysteine biosynthesis; L-cysteine from L-serine: step 1/2. The sequence is that of Serine acetyltransferase (cysE) from Staphylococcus aureus (strain COL).